Reading from the N-terminus, the 208-residue chain is LexA repressor (208 aa).

Positions 29–49 (VREICSAVGLSSTSTVHGHIS) form a DNA-binding region, H-T-H motif. Catalysis depends on for autocatalytic cleavage activity residues S129 and K167.

Belongs to the peptidase S24 family. In terms of assembly, homodimer.

It carries out the reaction Hydrolysis of Ala-|-Gly bond in repressor LexA.. Functionally, represses a number of genes involved in the response to DNA damage (SOS response), including recA and lexA. In the presence of single-stranded DNA, RecA interacts with LexA causing an autocatalytic cleavage which disrupts the DNA-binding part of LexA, leading to derepression of the SOS regulon and eventually DNA repair. The polypeptide is LexA repressor (Limosilactobacillus reuteri (strain DSM 20016) (Lactobacillus reuteri)).